A 137-amino-acid polypeptide reads, in one-letter code: Small ribosomal subunit protein bS6 (137 aa).

Residues 99-137 (LSPMKAAESREDRRSGGDDRPRRSADSEERQSASQDEEE) are disordered. Basic and acidic residues predominate over residues 105–129 (AESREDRRSGGDDRPRRSADSEERQ).

The protein belongs to the bacterial ribosomal protein bS6 family.

Functionally, binds together with bS18 to 16S ribosomal RNA. This Marinobacter nauticus (strain ATCC 700491 / DSM 11845 / VT8) (Marinobacter aquaeolei) protein is Small ribosomal subunit protein bS6.